The primary structure comprises 515 residues: Maturase K (515 aa).

This sequence belongs to the intron maturase 2 family. MatK subfamily.

The protein resides in the plastid. It localises to the chloroplast. Usually encoded in the trnK tRNA gene intron. Probably assists in splicing its own and other chloroplast group II introns. This Pinus pumila (Dwarf Siberian pine) protein is Maturase K.